The chain runs to 442 residues: Transforming growth factor beta-2 proprotein (442 aa).

Residues 1-20 form the signal peptide; the sequence is MHYCVLRTFLLLHLVPVALS. N-linked (GlcNAc...) asparagine glycosylation is found at Asn72, Asn168, and Asn269. 4 disulfides stabilise this stretch: Cys337/Cys346, Cys345/Cys408, Cys374/Cys439, and Cys378/Cys441.

It belongs to the TGF-beta family. As to quaternary structure, interacts with the serine proteases, HTRA1 and HTRA3. Interacts with ASPN. Interacts with MFAP5. In terms of assembly, interacts with Transforming growth factor beta-2 (TGF-beta-2) chain; interaction is non-covalent and maintains (TGF-beta-2) in a latent state. Interacts with LRRC32/GARP; leading to regulate activation of TGF-beta-2. Interacts with NREP; the interaction results in a decrease in TGFB2 autoinduction. Transforming growth factor beta-2: Homodimer; disulfide-linked. Transforming growth factor beta-2: Interacts with TGF-beta receptors (TGFBR1 and TGFBR2), leading to signal transduction. The precursor proprotein is cleaved in the Golgi apparatus to form Transforming growth factor beta-2 (TGF-beta-2) and Latency-associated peptide (LAP) chains, which remain non-covalently linked, rendering TGF-beta-2 inactive. As to expression, expressed in cardiomyocytes. In terms of tissue distribution, expressed in the aorta, primary bronchus, uterus, heart, skeletal muscle, sciatic nerve and spinal cord but not in the intestine.

It is found in the secreted. It localises to the extracellular space. The protein resides in the extracellular matrix. Functionally, precursor of the Latency-associated peptide (LAP) and Transforming growth factor beta-2 (TGF-beta-2) chains, which constitute the regulatory and active subunit of TGF-beta-2, respectively. Required to maintain the Transforming growth factor beta-2 (TGF-beta-2) chain in a latent state during storage in extracellular matrix. Associates non-covalently with TGF-beta-2 and regulates its activation via interaction with 'milieu molecules', such as LTBP1 and LRRC32/GARP, that control activation of TGF-beta-2. In terms of biological role, multifunctional protein that regulates various processes such as angiogenesis and heart development. Activation into mature form follows different steps: following cleavage of the proprotein in the Golgi apparatus, Latency-associated peptide (LAP) and Transforming growth factor beta-2 (TGF-beta-2) chains remain non-covalently linked rendering TGF-beta-2 inactive during storage in extracellular matrix. At the same time, LAP chain interacts with 'milieu molecules', such as LTBP1 and LRRC32/GARP, that control activation of TGF-beta-2 and maintain it in a latent state during storage in extracellular milieus. Once activated following release of LAP, TGF-beta-2 acts by binding to TGF-beta receptors (TGFBR1 and TGFBR2), which transduce signal. This Rattus norvegicus (Rat) protein is Transforming growth factor beta-2 proprotein (Tgfb2).